Reading from the N-terminus, the 217-residue chain is tRNA (guanine-N(7)-)-methyltransferase (217 aa).

The S-adenosyl-L-methionine site is built by E48, E73, N100, and D123. Residue D123 is part of the active site. K127 and D159 together coordinate substrate.

The protein belongs to the class I-like SAM-binding methyltransferase superfamily. TrmB family.

The catalysed reaction is guanosine(46) in tRNA + S-adenosyl-L-methionine = N(7)-methylguanosine(46) in tRNA + S-adenosyl-L-homocysteine. Its pathway is tRNA modification; N(7)-methylguanine-tRNA biosynthesis. In terms of biological role, catalyzes the formation of N(7)-methylguanine at position 46 (m7G46) in tRNA. The polypeptide is tRNA (guanine-N(7)-)-methyltransferase (Leptospira interrogans serogroup Icterohaemorrhagiae serovar Lai (strain 56601)).